The sequence spans 880 residues: Alanine--tRNA ligase (880 aa).

The Zn(2+) site is built by His-563, His-567, Cys-673, and His-677.

This sequence belongs to the class-II aminoacyl-tRNA synthetase family. Zn(2+) serves as cofactor.

The protein localises to the cytoplasm. The catalysed reaction is tRNA(Ala) + L-alanine + ATP = L-alanyl-tRNA(Ala) + AMP + diphosphate. Functionally, catalyzes the attachment of alanine to tRNA(Ala) in a two-step reaction: alanine is first activated by ATP to form Ala-AMP and then transferred to the acceptor end of tRNA(Ala). Also edits incorrectly charged Ser-tRNA(Ala) and Gly-tRNA(Ala) via its editing domain. This chain is Alanine--tRNA ligase, found in Caulobacter vibrioides (strain ATCC 19089 / CIP 103742 / CB 15) (Caulobacter crescentus).